Consider the following 129-residue polypeptide: Small ribosomal subunit protein uS11c (129 aa).

The protein belongs to the universal ribosomal protein uS11 family. As to quaternary structure, part of the 30S ribosomal subunit.

Its subcellular location is the plastid. It is found in the chloroplast. The chain is Small ribosomal subunit protein uS11c from Cyanidium caldarium (Red alga).